The primary structure comprises 325 residues: MAMEGPILCRAVMQAKLPVTMISNSLTKSGQLGTAFLGCVCKYRNITRLISPIYQPAQKNFATVCGSFSSSSDGNGYMAGNFSESDEDYVNSTVLEAVEVRSGAEGYVIKMRDGKNLRCVHNNSQGRNIPESAPQPAIVLRIEDGSETLLPIIVLEMPSVLLMAAIRNVHIARPTIYQVVKEMIDKMGYEVKLVRINKRIQEAYCAELFLTKVGDHTESITFDLRPSDAINIAVRCKVPIQVHRSLAYSDGIRSVEPARMAIAAGMSDGLLFTELDRPDGQPCVEAQEFGLIRNMLIAAVEERYKDAATWRDKLMLLRSKRKNWA.

Positions 119–254 (CVHNNSQGRN…SLAYSDGIRS (136 aa)) constitute a BFN domain. The 36-residue stretch at 285–320 (EAQEFGLIRNMLIAAVEERYKDAATWRDKLMLLRSK) folds into the UVR domain.

This sequence belongs to the bifunctional nuclease family.

The protein resides in the nucleus. Its function is as follows. Bifunctional nuclease with both RNase and DNase activities. Involved in basal defense response. Participates in abscisic acid-derived callose deposition following infection by a necrotrophic pathogen. This is Bifunctional nuclease 2 (BBD2) from Oryza sativa subsp. japonica (Rice).